Reading from the N-terminus, the 532-residue chain is Phosphoenolpyruvate carboxykinase (ATP) (532 aa).

3 residues coordinate substrate: Arg60, Tyr194, and Lys200. ATP contacts are provided by residues Lys200, His219, and 237-245 (GLSGTGKTT). Mn(2+)-binding residues include Lys200 and His219. Mn(2+) is bound at residue Asp258. The ATP site is built by Glu286, Arg324, and Thr449. Substrate is bound at residue Arg324.

Belongs to the phosphoenolpyruvate carboxykinase (ATP) family. It depends on Mn(2+) as a cofactor.

It localises to the cytoplasm. The enzyme catalyses oxaloacetate + ATP = phosphoenolpyruvate + ADP + CO2. Its pathway is carbohydrate biosynthesis; gluconeogenesis. In terms of biological role, involved in the gluconeogenesis. Catalyzes the conversion of oxaloacetate (OAA) to phosphoenolpyruvate (PEP) through direct phosphoryl transfer between the nucleoside triphosphate and OAA. In Paracoccus denitrificans (strain Pd 1222), this protein is Phosphoenolpyruvate carboxykinase (ATP).